We begin with the raw amino-acid sequence, 348 residues long: Neuronal growth regulator 1 (348 aa).

Positions 1 to 31 (MVLLAQGACCSNQWLAAVLLSLCSCLPAGQS) are cleaved as a signal peptide. Ig-like C2-type domains follow at residues 32–128 (VDFP…VHLT), 133–215 (PKIY…RVIV), and 219–307 (PTIQ…LPLN). A disulfide bridge connects residues C54 and C112. N67 and N149 each carry an N-linked (GlcNAc...) asparagine glycan. Intrachain disulfides connect C154/C197 and C239/C291. The residue at position 181 (Y181) is a Phosphotyrosine. 4 N-linked (GlcNAc...) asparagine glycosylation sites follow: N269, N280, N288, and N301. The GPI-anchor amidated glycine moiety is linked to residue G318. Residues 319 to 348 (SACDLFSCWSLALTLSSVISIFYLKNAILQ) constitute a propeptide, removed in mature form.

The protein belongs to the immunoglobulin superfamily. IgLON family. As to expression, expressed in brain.

The protein localises to the cell membrane. In terms of biological role, may be involved in cell-adhesion. May function as a trans-neural growth-promoting factor in regenerative axon sprouting in the mammalian brain. The protein is Neuronal growth regulator 1 (Negr1) of Mus musculus (Mouse).